The sequence spans 257 residues: 5-oxoprolinase subunit A (257 aa).

Belongs to the LamB/PxpA family. As to quaternary structure, forms a complex composed of PxpA, PxpB and PxpC.

The enzyme catalyses 5-oxo-L-proline + ATP + 2 H2O = L-glutamate + ADP + phosphate + H(+). Functionally, catalyzes the cleavage of 5-oxoproline to form L-glutamate coupled to the hydrolysis of ATP to ADP and inorganic phosphate. The polypeptide is 5-oxoprolinase subunit A (Halalkalibacterium halodurans (strain ATCC BAA-125 / DSM 18197 / FERM 7344 / JCM 9153 / C-125) (Bacillus halodurans)).